The sequence spans 442 residues: GPI mannosyltransferase 1 (442 aa).

8 helical membrane-spanning segments follow: residues 22 to 42 (INLTKSIFIVGLVIRLVLIVF), 95 to 115 (ILIHPAFGKLLFVICDMIIAY), 177 to 197 (LASIFYGLSVHFKIYPIIYSI), 242 to 262 (AFTFISLTFIMYLIYGYIFLF), 307 to 327 (MIVALASFLPQVILLLAITLV), 336 to 356 (LLLETITFVAFNKVCTVQYFI), 361 to 381 (ILPLVIPSSSLGLVQYIILFA), and 408 to 428 (IWVAGLLFFIANIYILVKLIL).

This sequence belongs to the PIGM family.

Its subcellular location is the endoplasmic reticulum membrane. The protein operates within glycolipid biosynthesis; glycosylphosphatidylinositol-anchor biosynthesis. In terms of biological role, mannosyltransferase involved in glycosylphosphatidylinositol-anchor biosynthesis. Transfers the first alpha-1,4-mannose to GlcN-acyl-PI during GPI precursor assembly. The sequence is that of GPI mannosyltransferase 1 (pigm) from Dictyostelium discoideum (Social amoeba).